Consider the following 188-residue polypeptide: Protease-associated domain-containing protein 1 (188 aa).

An N-terminal signal peptide occupies residues 1-21; the sequence is MVPGAAGWCCLVLWLPACVAA. The region spanning 83 to 163 is the PA domain; it reads IQDQIALVER…RSLEQHGLPW (81 aa). Asn-171 carries an N-linked (GlcNAc...) asparagine glycan.

Post-translationally, N-glycosylated; required for efficient secretion. Highly expressed in skeletal muscle, heart and liver. Expressed at intermediate level in kidney.

Its subcellular location is the secreted. In terms of biological role, plays a role in the modulation of physical activity and adiposity. The chain is Protease-associated domain-containing protein 1 from Homo sapiens (Human).